Here is a 775-residue protein sequence, read N- to C-terminus: N6-adenosine-methyltransferase non-catalytic subunit MTB (775 aa).

Basic and acidic residues predominate over residues 1-10; it reads MKKKQEESSL. Disordered stretches follow at residues 1-424 and 520-569; these read MKKK…GAIP and DRGG…EQND. A compositionally biased stretch (low complexity) spans 40-49; sequence FESSSRSGGS. Basic and acidic residues-rich tracts occupy residues 50–79, 100–117, 125–222, 229–278, and 333–344; these read KSKE…ERTH, DGDH…DSGG, EHGE…LKDN, SSGD…RGEA, and EWAHNQEGRQRS. A compositionally biased stretch (polar residues) spans 375-400; it reads QRGSTPGRTNFVQTPNRGYQTPQGTR.

Belongs to the MT-A70-like family. As to quaternary structure, forms homodimers. Interacts with HAKAI, MTA and VIR. Associates with MTA, FIP37, VIR and HAKAI to form the m6A writer complex which is essential for adenosine methylation at specific mRNA sequences.

It localises to the nucleus speckle. Its subcellular location is the nucleus. The protein localises to the nucleoplasm. Its function is as follows. Probable non-catalytic subunit of the N6-methyltransferase complex, a multiprotein complex that mediates N6-methyladenosine (m6A) methylation at the 5'-[AG]GAC-3' consensus sites of some mRNAs. Associates with MTA, FIP37, VIR and HAKAI to form the m6A writer complex which is essential for adenosine methylation at specific mRNA sequences. N6-methyladenosine (m6A) plays a role in mRNA stability, processing, translation efficiency and editing. The sequence is that of N6-adenosine-methyltransferase non-catalytic subunit MTB from Arabidopsis thaliana (Mouse-ear cress).